A 449-amino-acid chain; its full sequence is Kynurenine 3-monooxygenase (449 aa).

Belongs to the aromatic-ring hydroxylase family. KMO subfamily. It depends on FAD as a cofactor.

The enzyme catalyses L-kynurenine + NADPH + O2 + H(+) = 3-hydroxy-L-kynurenine + NADP(+) + H2O. It participates in cofactor biosynthesis; NAD(+) biosynthesis; quinolinate from L-kynurenine: step 1/3. In terms of biological role, catalyzes the hydroxylation of L-kynurenine (L-Kyn) to form 3-hydroxy-L-kynurenine (L-3OHKyn). Required for synthesis of quinolinic acid. The polypeptide is Kynurenine 3-monooxygenase (Cytophaga hutchinsonii (strain ATCC 33406 / DSM 1761 / CIP 103989 / NBRC 15051 / NCIMB 9469 / D465)).